The sequence spans 602 residues: Zinc finger MYND domain-containing protein 11 (602 aa).

Residues 6-82 (KRRQADTKAI…CKGSKAGIEQ (77 aa)) enclose the SAMD1-like winged helix (WH) domain. Residues 100-148 (DWYCFECHLPGEVLICDLCFRVYHSKCLSDEFRLRDSSSPWQCPVCRSI) form a PHD-type zinc finger. The region spanning 149-255 (KKKNTNKQEM…KDTCHELDEL (107 aa)) is the Bromo domain. Zn(2+) is bound by residues C258, C261, C277, and H281. One can recognise a PWWP domain in the interval 280–331 (NHELVWAKMKGFGFWPAKVMQKEDNQVDVRFFGHHHQRAWIPSENIQDITVN). A Glycyl lysine isopeptide (Lys-Gly) (interchain with G-Cter in SUMO2) cross-link involves residue K366. Residues 366–459 (KNEDRGEEEA…MLHRSTQTTN (94 aa)) form a disordered region. Residues 394-400 (RAKKGRR) carry the Nuclear localization signal motif. Residues K407 and K408 each participate in a glycyl lysine isopeptide (Lys-Gly) (interchain with G-Cter in SUMO2) cross-link. S421 bears the Phosphoserine mark. Positions 435-459 (SVSTQTKKLSASSPRMLHRSTQTTN) are enriched in polar residues. Residues 452 to 572 (HRSTQTTNDG…CYNCEEEAMY (121 aa)) form an interaction with human adenovirus E1A region. Zn(2+) contacts are provided by C563, C566, C574, C575, C581, C585, H594, and C598. An MYND-type zinc finger spans residues 563–598 (CYNCEEEAMYHCCWNTSYCSIKCQQEHWHAEHKRTC).

Homooligomer; forms homooligomers via its C-terminus. Interacts with histone H3.3 trimethylated at 'Lys-36' (H3.3K36me3). Interacts (via MYND-type zinc finger) with NCOR1. Interacts (via MYND-type zinc finger) with MGA protein (via PXLXP motif). Interacts (via MYND-type zinc finger) with EZH2. Interacts with EMSY and E2F6. Interacts with PIAS1 and UBE2I. As to quaternary structure, (Microbial infection) Interacts (via MYND-type zinc finger) with human adenovirus early E1A protein (via PXLXP motif); this interaction inhibits E1A mediated transactivation. In terms of assembly, (Microbial infection) Interacts (via MYND-type zinc finger) with Epstein-Barr virus EBNA2 protein (via PXLXP motif). Interacts with Epstein-Barr virus-derived protein LMP1; leading to negatively regulate NF-kappa-B activation by Epstein-Barr virus-derived protein LMP1. Post-translationally, sumoylated following its interaction with PIAS1 and UBE2I. In terms of processing, ubiquitinated, leading to proteasomal degradation. As to expression, ubiquitous.

The protein localises to the nucleus. It is found in the chromosome. Its function is as follows. Chromatin reader that specifically recognizes and binds histone H3.3 trimethylated at 'Lys-36' (H3.3K36me3) and regulates RNA polymerase II elongation. Does not bind other histone H3 subtypes (H3.1 or H3.2). Colocalizes with highly expressed genes and functions as a transcription corepressor by modulating RNA polymerase II at the elongation stage. Binds non-specifically to dsDNA. Acts as a tumor-suppressor by repressing a transcriptional program essential for tumor cell growth. Functionally, (Microbial infection) Inhibits Epstein-Barr virus EBNA2-mediated transcriptional activation and host cell proliferation, through direct interaction. This Homo sapiens (Human) protein is Zinc finger MYND domain-containing protein 11.